The sequence spans 1020 residues: X-linked retinitis pigmentosa GTPase regulator (1020 aa).

RCC1 repeat units lie at residues 54–105 (NKLY…STEG), 106–158 (GNVY…LTED), 159–208 (GRLF…VTTD), 209–261 (GELY…LTEN), 262–313 (AVYT…ITDI), and 314–367 (GLMY…FAAP). A phosphoserine mark is found at S418 and S518. Disordered regions lie at residues 609–776 (HENN…IISK), 790–906 (EIPE…KEKA), and 989–1020 (DNKDADQNHMSQNHQNIPPTNTERRSKSCTIL). Basic and acidic residues-rich tracts occupy residues 618–636 (LDAKEIEKESDGGHSQKES), 644–665 (EKETKLAEIAGMKDLREREKST), 685–698 (EENKDFVKKRESCK), 704–715 (DSERESVEKPDS), 760–771 (KLIEQGNEKETK), 790–802 (EIPEEKEGAEDSK), 816–853 (ENVKVHGGRKEKTEILSDDLTDKAEDHEFSKTEELKLE), and 883–906 (SKTEGAERTNDDSSAETIEKKEKA). Residues 996 to 1009 (NHMSQNHQNIPPTN) are compositionally biased toward polar residues. C1017 is subject to Cysteine methyl ester. C1017 carries S-geranylgeranyl cysteine lipidation. The propeptide at 1018-1020 (TIL) is removed in mature form.

As to quaternary structure, interacts with SPATA7. Interacts with CEP290. Interacts with WHRN. Interacts with PDE6D. Interacts with RPGRIP1. Interacts with RPGRIP1L. PDE6D, RPGRIP1 and RPGRIP1L may compete for the same binding sites. Interacts with RAB37 and RAB8A (in GDP-bound forms); functions as GEF for RAB37 and RAB8A. In terms of assembly, isoform 6 interacts with NPM1 (via C-terminus). Isoform 6 interacts with SMC1A and SMC3. Post-translationally, prenylated. As to expression, heart, brain, placenta, lung, liver, muscle, kidney, retina, pancreas and fetal retinal pigment epithelium. Isoform 3 is found only in the retina. Colocalizes with RPGRIP1 in the outer segment of rod photoreceptors and cone outer segments.

It localises to the cytoplasm. The protein localises to the cytoskeleton. The protein resides in the flagellum axoneme. It is found in the golgi apparatus. Its subcellular location is the cell projection. It localises to the cilium. The protein localises to the microtubule organizing center. The protein resides in the centrosome. It is found in the cilium basal body. Its subcellular location is the cilium axoneme. Acts as a guanine-nucleotide releasing factor (GEF) for RAB8A and RAB37 by promoting the conversion of inactive RAB-GDP to the active form RAB-GTP. GEF activity towards RAB8A may facilitate ciliary trafficking by modulating ciliary intracellular localization of RAB8A. GEF activity towards RAB37 maintains autophagic homeostasis and retinal function. Involved in photoreceptor integrity. May control cilia formation by regulating actin stress filaments and cell contractility. May be involved in microtubule organization and regulation of transport in primary cilia. May play a critical role in spermatogenesis and in intraflagellar transport processes. The protein is X-linked retinitis pigmentosa GTPase regulator of Homo sapiens (Human).